The chain runs to 569 residues: MDAGSSRSLENAVNRIYHDQLVPKINTSKKMSTLAHPPNILEMSQEIKKNCGGKQVEITLERTKMTKGIKEKQSNDLEKAAFKRKAEGEEKPTRKKQAKITELDNQLITMPLPHIPLKNIMDVEMKLVYIDEMGVRYEFVESFMSTGSQPTCQAAEIVDPLSVHNFSFLPQIDKWLQVALKDASSCYRQKKYALAAGQFRTALELCSKGAVLGEPFDAPAEDIASVASFIETKLVTCYLRMRKPDLALNHAHRSIVLNPAYFRNHLRQATVFRCLERYSEAARSAMIADYMFWLGGGREESISKLIKLYWQAMIEEAITRAESFSVMYTPFATKIRADKIEKVKDAFTKTHPAYAEYMYTDLQALHMLPQTVDWSSFPPQQYLLTLGFKNKDDGKFLEKISSRKLPIFTEHKTPFGLTREDTVRQMETMGKRILPILDFIRSTQLNGSFPASSGVMEKLQYASLLSQLQRVKEQSQVINQAMAELATIPYLQDISQQEAELLQSLMADAMDTLEGRRNNNERVWNMIQKVGQIEDFLYQLEDSFLKTKKLRTARRQKTKMKRLQTVQQR.

Over residues 67 to 92 the composition is skewed to basic and acidic residues; the sequence is KGIKEKQSNDLEKAAFKRKAEGEEKP. A disordered region spans residues 67 to 96; the sequence is KGIKEKQSNDLEKAAFKRKAEGEEKPTRKK.

This sequence belongs to the SPATA16 family. As to expression, expressed in testis.

It localises to the golgi apparatus. The protein localises to the cytoplasmic vesicle. Its subcellular location is the secretory vesicle. It is found in the acrosome. Its function is as follows. Essential for spermiogenesis and male fertility. Involved in the formation of sperm acrosome during spermatogenesis. This Homo sapiens (Human) protein is Spermatogenesis-associated protein 16 (SPATA16).